The primary structure comprises 89 residues: Small ribosomal subunit protein bS20 (89 aa).

Positions 1–12 (MANHKSAIKRHR) are enriched in basic residues. Residues 1–26 (MANHKSAIKRHRQSVERAGRNRAART) form a disordered region.

It belongs to the bacterial ribosomal protein bS20 family.

Its function is as follows. Binds directly to 16S ribosomal RNA. This chain is Small ribosomal subunit protein bS20, found in Desulfovibrio desulfuricans (strain ATCC 27774 / DSM 6949 / MB).